Here is a 597-residue protein sequence, read N- to C-terminus: Elongation factor 4 (597 aa).

The tr-type G domain occupies K2–V184. Residues D14–T19 and N131–D134 contribute to the GTP site.

It belongs to the TRAFAC class translation factor GTPase superfamily. Classic translation factor GTPase family. LepA subfamily.

It localises to the cell inner membrane. The catalysed reaction is GTP + H2O = GDP + phosphate + H(+). Its function is as follows. Required for accurate and efficient protein synthesis under certain stress conditions. May act as a fidelity factor of the translation reaction, by catalyzing a one-codon backward translocation of tRNAs on improperly translocated ribosomes. Back-translocation proceeds from a post-translocation (POST) complex to a pre-translocation (PRE) complex, thus giving elongation factor G a second chance to translocate the tRNAs correctly. Binds to ribosomes in a GTP-dependent manner. The protein is Elongation factor 4 of Aeromonas salmonicida (strain A449).